Consider the following 185-residue polypeptide: Urease accessory protein UreE (185 aa).

The disordered stretch occupies residues 153–185; it reads LRANSAQGHGHSHSHSHDHHGYHHHGDGNWHKH. Positions 162–175 are enriched in basic residues; the sequence is GHSHSHSHDHHGYH. Basic and acidic residues predominate over residues 176 to 185; the sequence is HHGDGNWHKH.

It belongs to the UreE family.

The protein localises to the cytoplasm. Its function is as follows. Involved in urease metallocenter assembly. Binds nickel. Probably functions as a nickel donor during metallocenter assembly. This Haemophilus influenzae (strain PittGG) protein is Urease accessory protein UreE.